The primary structure comprises 101 residues: Long chronological lifespan protein 1 (101 aa).

Residues Met-1–Ser-17 form the signal peptide. A lipid anchor (GPI-anchor amidated serine) is attached at Ser-81. The propeptide at Phe-82–Phe-101 is removed in mature form.

The protein localises to the cell membrane. This Saccharomyces cerevisiae (strain ATCC 204508 / S288c) (Baker's yeast) protein is Long chronological lifespan protein 1 (LCL1).